Here is a 433-residue protein sequence, read N- to C-terminus: 23S rRNA (uracil(1939)-C(5))-methyltransferase RlmD (433 aa).

Residues 10-68 (RTTTRQIITVSVNDLDSFGQGVARHNGKTLFIPGLLPQENAEVAVTEDKKQYARAKVVR) form the TRAM domain. 4 residues coordinate [4Fe-4S] cluster: Cys-81, Cys-87, Cys-90, and Cys-162. Residues Gln-265, Phe-294, Asn-299, Glu-315, Asn-342, and Asp-363 each contribute to the S-adenosyl-L-methionine site. The Nucleophile role is filled by Cys-389.

Belongs to the class I-like SAM-binding methyltransferase superfamily. RNA M5U methyltransferase family. RlmD subfamily.

The catalysed reaction is uridine(1939) in 23S rRNA + S-adenosyl-L-methionine = 5-methyluridine(1939) in 23S rRNA + S-adenosyl-L-homocysteine + H(+). Catalyzes the formation of 5-methyl-uridine at position 1939 (m5U1939) in 23S rRNA. The sequence is that of 23S rRNA (uracil(1939)-C(5))-methyltransferase RlmD from Shigella flexneri.